The chain runs to 448 residues: Glucose-6-phosphate isomerase (448 aa).

E288 serves as the catalytic Proton donor. Catalysis depends on residues H309 and K423.

Belongs to the GPI family.

It localises to the cytoplasm. The enzyme catalyses alpha-D-glucose 6-phosphate = beta-D-fructose 6-phosphate. The protein operates within carbohydrate biosynthesis; gluconeogenesis. It functions in the pathway carbohydrate degradation; glycolysis; D-glyceraldehyde 3-phosphate and glycerone phosphate from D-glucose: step 2/4. Its function is as follows. Catalyzes the reversible isomerization of glucose-6-phosphate to fructose-6-phosphate. In Fusobacterium nucleatum subsp. nucleatum (strain ATCC 25586 / DSM 15643 / BCRC 10681 / CIP 101130 / JCM 8532 / KCTC 2640 / LMG 13131 / VPI 4355), this protein is Glucose-6-phosphate isomerase.